Reading from the N-terminus, the 144-residue chain is Apidaecins type 22 (144 aa).

The N-terminal stretch at 1–19 (MKNFALAILVVTFVVAVFG) is a signal peptide. 4 consecutive propeptides follow at residues 20-42 (NTNL…EAEP), 63-70 (EAEPEAEP), 91-98 (EAEPEAEP), and 119-126 (EAEPEAEP). A disordered region spans residues 20–144 (NTNLDPPTRP…PQPRPPHPRI (125 aa)). Residues 134–144 (IPQPRPPHPRI) show a composition bias toward pro residues.

This sequence belongs to the apidaecin family.

It is found in the secreted. Apidaecins have bactericidal activity; predominantly against Gram-negative bacteria. They seem to interfere with cell propagation. In Apis mellifera (Honeybee), this protein is Apidaecins type 22.